Reading from the N-terminus, the 400-residue chain is DNA primase small subunit PriS (400 aa).

Catalysis depends on residues Asp98, Asp100, and Asp306.

This sequence belongs to the eukaryotic-type primase small subunit family. Heterodimer of a small subunit (PriS) and a large subunit (PriL). Mg(2+) serves as cofactor. Requires Mn(2+) as cofactor.

Catalytic subunit of DNA primase, an RNA polymerase that catalyzes the synthesis of short RNA molecules used as primers for DNA polymerase during DNA replication. The small subunit contains the primase catalytic core and has DNA synthesis activity on its own. Binding to the large subunit stabilizes and modulates the activity, increasing the rate of DNA synthesis while decreasing the length of the DNA fragments, and conferring RNA synthesis capability. The DNA polymerase activity may enable DNA primase to also catalyze primer extension after primer synthesis. May also play a role in DNA repair. This Methanocella arvoryzae (strain DSM 22066 / NBRC 105507 / MRE50) protein is DNA primase small subunit PriS.